Reading from the N-terminus, the 268-residue chain is MHLQRLKEELERDIARIAEFKPVVHHITNYVAMNDSANITIAIGASPIMSFAHGEIDELVSIASSLLINIGTLDEYIIQAVMLAVKSAKSKGVPVLLDPVGSGATKLRTSTALSVAEEGVDVIKGNQGEILSLLRKEGVVRGVDSKVTAEAADVKEVARKFGLVVVATGKEDLISDGRSVYVMRNGTEMLGRITASGCMLGSVIASFMAVQKDFLLASLEGLACYNVAGELAAEKSSGTASFRSNLIDEISKITAEKVIERLNLERVV.

Residue methionine 49 participates in substrate binding. Residues lysine 124 and threonine 168 each coordinate ATP. Substrate is bound at residue alanine 195.

The protein belongs to the Thz kinase family. The cofactor is Mg(2+).

It carries out the reaction 5-(2-hydroxyethyl)-4-methylthiazole + ATP = 4-methyl-5-(2-phosphooxyethyl)-thiazole + ADP + H(+). It participates in cofactor biosynthesis; thiamine diphosphate biosynthesis; 4-methyl-5-(2-phosphoethyl)-thiazole from 5-(2-hydroxyethyl)-4-methylthiazole: step 1/1. In terms of biological role, catalyzes the phosphorylation of the hydroxyl group of 4-methyl-5-beta-hydroxyethylthiazole (THZ). The polypeptide is Hydroxyethylthiazole kinase (Archaeoglobus fulgidus (strain ATCC 49558 / DSM 4304 / JCM 9628 / NBRC 100126 / VC-16)).